Here is a 397-residue protein sequence, read N- to C-terminus: DnaJ homolog subfamily A member 1 (397 aa).

One can recognise a J domain in the interval 6-68 (TYYDVLGVKP…KKRELYDKGG (63 aa)). At Lys66 the chain carries N6-acetyllysine. Phosphoserine is present on Ser83. The CR-type zinc finger occupies 121–205 (GATRKLALQK…CNGRKIVREK (85 aa)). Zn(2+)-binding residues include Cys134, Cys137, Cys150, Cys153, Cys177, Cys180, Cys193, and Cys196. 4 CXXCXGXG motif repeats span residues 134 to 141 (CDKCEGRG), 150 to 157 (CPNCRGTG), 177 to 184 (CMECQGHG), and 193 to 200 (CKSCNGRK). Residue Ser335 is modified to Phosphoserine. The disordered stretch occupies residues 352 to 397 (VEETDEMDQVELVDFDPNQERRRHYNGEAYEDDEHHPRGGVQCQTS). The span at 353–365 (EETDEMDQVELVD) shows a compositional bias: acidic residues. Phosphotyrosine is present on Tyr381. Cysteine methyl ester is present on Cys394. Cys394 carries the S-farnesyl cysteine lipid modification. A propeptide spans 395 to 397 (QTS) (removed in mature form).

As to quaternary structure, identified in a complex with HSPA1B and BAX. Interacts with RNF207.

The protein resides in the membrane. Its subcellular location is the cytoplasm. It is found in the microsome. The protein localises to the mitochondrion. It localises to the nucleus. The protein resides in the perinuclear region. Co-chaperone for HSPA8/Hsc70. Plays a role in protein transport into mitochondria via its role as co-chaperone. Stimulates ATP hydrolysis, but not the folding of unfolded proteins mediated by HSPA1A (in vitro). Promotes apoptosis in response to cellular stress mediated by exposure to anisomycin or UV. Functions as co-chaperone for HSPA1B and negatively regulates the translocation of BAX from the cytosol to mitochondria in response to cellular stress, thereby protecting cells against apoptosis. The sequence is that of DnaJ homolog subfamily A member 1 (Dnaja1) from Mus musculus (Mouse).